The primary structure comprises 620 residues: Chaperone protein HtpG (620 aa).

Residues 1–334 (MTTTDTAPQT…SEDLPLNLSR (334 aa)) form an a; substrate-binding region. The segment at 335–548 (EMLQNNPQLV…GQGPDRALER (214 aa)) is b. The c stretch occupies residues 549–620 (MLAQQNRGGA…RINRLVLRAL (72 aa)).

Belongs to the heat shock protein 90 family. As to quaternary structure, homodimer.

It is found in the cytoplasm. Its function is as follows. Molecular chaperone. Has ATPase activity. This Rhodopseudomonas palustris (strain BisA53) protein is Chaperone protein HtpG.